Reading from the N-terminus, the 269-residue chain is Ribosomal RNA small subunit methyltransferase J (269 aa).

Residues E124–R125 and D188 contribute to the S-adenosyl-L-methionine site.

Belongs to the methyltransferase superfamily. RsmJ family.

It localises to the cytoplasm. The enzyme catalyses guanosine(1516) in 16S rRNA + S-adenosyl-L-methionine = N(2)-methylguanosine(1516) in 16S rRNA + S-adenosyl-L-homocysteine + H(+). In terms of biological role, specifically methylates the guanosine in position 1516 of 16S rRNA. This chain is Ribosomal RNA small subunit methyltransferase J, found in Saccharophagus degradans (strain 2-40 / ATCC 43961 / DSM 17024).